The primary structure comprises 184 residues: Probable RNA 2'-phosphotransferase (184 aa).

This sequence belongs to the KptA/TPT1 family.

Functionally, removes the 2'-phosphate from RNA via an intermediate in which the phosphate is ADP-ribosylated by NAD followed by a presumed transesterification to release the RNA and generate ADP-ribose 1''-2''-cyclic phosphate (APPR&gt;P). May function as an ADP-ribosylase. The sequence is that of Probable RNA 2'-phosphotransferase from Escherichia coli (strain 55989 / EAEC).